The following is a 464-amino-acid chain: Cysteine--tRNA ligase (464 aa).

Cysteine 29 provides a ligand contact to Zn(2+). A 'HIGH' region motif is present at residues alanine 31–histidine 41. Zn(2+) is bound by residues cysteine 207, histidine 232, and glutamate 236. Residues lysine 263–serine 267 carry the 'KMSKS' region motif. Lysine 266 is a binding site for ATP.

Belongs to the class-I aminoacyl-tRNA synthetase family. In terms of assembly, monomer. Zn(2+) serves as cofactor.

The protein resides in the cytoplasm. The enzyme catalyses tRNA(Cys) + L-cysteine + ATP = L-cysteinyl-tRNA(Cys) + AMP + diphosphate. The sequence is that of Cysteine--tRNA ligase from Rhodococcus opacus (strain B4).